The primary structure comprises 349 residues: Cobalt-precorrin-5B C(1)-methyltransferase (349 aa).

This sequence belongs to the CbiD family.

It carries out the reaction Co-precorrin-5B + S-adenosyl-L-methionine = Co-precorrin-6A + S-adenosyl-L-homocysteine. The protein operates within cofactor biosynthesis; adenosylcobalamin biosynthesis; cob(II)yrinate a,c-diamide from sirohydrochlorin (anaerobic route): step 6/10. In terms of biological role, catalyzes the methylation of C-1 in cobalt-precorrin-5B to form cobalt-precorrin-6A. This chain is Cobalt-precorrin-5B C(1)-methyltransferase, found in Saccharolobus solfataricus (strain ATCC 35092 / DSM 1617 / JCM 11322 / P2) (Sulfolobus solfataricus).